The following is a 232-amino-acid chain: Small ribosomal subunit protein uS2 (232 aa).

This sequence belongs to the universal ribosomal protein uS2 family.

This chain is Small ribosomal subunit protein uS2, found in Heliobacterium modesticaldum (strain ATCC 51547 / Ice1).